The following is a 104-amino-acid chain: Large ribosomal subunit protein uL15z (104 aa).

Belongs to the universal ribosomal protein uL15 family.

This chain is Large ribosomal subunit protein uL15z (RPL27AA), found in Arabidopsis thaliana (Mouse-ear cress).